The following is a 763-amino-acid chain: Exo-1,4-beta-xylosidase bxlB (763 aa).

The signal sequence occupies residues 1 to 23; it reads MAVFKSWNLALLSSLFIPALCQS. Asn-63 carries N-linked (GlcNAc...) asparagine glycosylation. Asp-288 is an active-site residue. 6 N-linked (GlcNAc...) asparagine glycosylation sites follow: Asn-340, Asn-408, Asn-419, Asn-458, Asn-621, and Asn-760.

This sequence belongs to the glycosyl hydrolase 3 family.

It localises to the secreted. The enzyme catalyses Hydrolysis of (1-&gt;4)-beta-D-xylans, to remove successive D-xylose residues from the non-reducing termini.. It participates in glycan degradation; xylan degradation. Xylan 1,4-beta-xylosidase involved in the hydrolysis of xylan, a major structural heterogeneous polysaccharide found in plant biomass representing the second most abundant polysaccharide in the biosphere, after cellulose. Active against rye arabinoxylan and xylohexaose, but not paranitrophenyl-beta-xyloside. This Emericella nidulans (strain FGSC A4 / ATCC 38163 / CBS 112.46 / NRRL 194 / M139) (Aspergillus nidulans) protein is Exo-1,4-beta-xylosidase bxlB (bxlB).